The sequence spans 378 residues: tRNA (guanine(26)-N(2))-dimethyltransferase (378 aa).

Residues 4-374 form the Trm1 methyltransferase domain; sequence KEVTEGKVRI…KGYEEIIRCV (371 aa). Positions 44, 69, 87, 114, and 115 each coordinate S-adenosyl-L-methionine. Zn(2+) contacts are provided by Cys246, Cys249, Cys263, and Cys266.

This sequence belongs to the class I-like SAM-binding methyltransferase superfamily. Trm1 family.

It catalyses the reaction guanosine(26) in tRNA + 2 S-adenosyl-L-methionine = N(2)-dimethylguanosine(26) in tRNA + 2 S-adenosyl-L-homocysteine + 2 H(+). Functionally, dimethylates a single guanine residue at position 26 of a number of tRNAs using S-adenosyl-L-methionine as donor of the methyl groups. This is tRNA (guanine(26)-N(2))-dimethyltransferase from Saccharolobus islandicus (strain M.14.25 / Kamchatka #1) (Sulfolobus islandicus).